Here is a 96-residue protein sequence, read N- to C-terminus: Putative regulatory protein DET0036 (96 aa).

The protein belongs to the RemA family.

This is Putative regulatory protein DET0036 from Dehalococcoides mccartyi (strain ATCC BAA-2266 / KCTC 15142 / 195) (Dehalococcoides ethenogenes (strain 195)).